The sequence spans 99 residues: Small integral membrane protein 14 (99 aa).

Over 1-49 (MAEGGFDPCECVCSHEHAMRRLINLLRQSQSYCTDTECLRELPGPSSDS) the chain is Lumenal. A helical membrane pass occupies residues 50 to 70 (GISITVILMAWMVIAMLLFLL). Residues 71-99 (RPPNLRGSSLPGKPSSPHSGQDPPAPPVD) are Cytoplasmic-facing. The interval 77 to 99 (GSSLPGKPSSPHSGQDPPAPPVD) is disordered.

In terms of tissue distribution, ubiquitously expressed.

It is found in the endoplasmic reticulum membrane. This is Small integral membrane protein 14 (Smim14) from Mus musculus (Mouse).